The following is a 392-amino-acid chain: Putative non-inhibitory serpin-10 (392 aa).

The segment at 333–357 is RCL; sequence GTTAVEATYSCCSPTYSGPESPKPR.

Belongs to the serpin family.

This is Putative non-inhibitory serpin-10 from Oryza sativa subsp. japonica (Rice).